The sequence spans 148 residues: Protein-export protein SecB (148 aa).

It belongs to the SecB family. Homotetramer, a dimer of dimers. One homotetramer interacts with 1 SecA dimer.

It localises to the cytoplasm. One of the proteins required for the normal export of preproteins out of the cell cytoplasm. It is a molecular chaperone that binds to a subset of precursor proteins, maintaining them in a translocation-competent state. It also specifically binds to its receptor SecA. The chain is Protein-export protein SecB from Psychrobacter arcticus (strain DSM 17307 / VKM B-2377 / 273-4).